The sequence spans 271 residues: Ribosomal RNA small subunit methyltransferase A (271 aa).

The S-adenosyl-L-methionine site is built by H11, L13, G38, E59, D84, and N109.

The protein belongs to the class I-like SAM-binding methyltransferase superfamily. rRNA adenine N(6)-methyltransferase family. RsmA subfamily.

The protein localises to the cytoplasm. It carries out the reaction adenosine(1518)/adenosine(1519) in 16S rRNA + 4 S-adenosyl-L-methionine = N(6)-dimethyladenosine(1518)/N(6)-dimethyladenosine(1519) in 16S rRNA + 4 S-adenosyl-L-homocysteine + 4 H(+). In terms of biological role, specifically dimethylates two adjacent adenosines (A1518 and A1519) in the loop of a conserved hairpin near the 3'-end of 16S rRNA in the 30S particle. May play a critical role in biogenesis of 30S subunits. The sequence is that of Ribosomal RNA small subunit methyltransferase A from Trichormus variabilis (strain ATCC 29413 / PCC 7937) (Anabaena variabilis).